A 670-amino-acid chain; its full sequence is G-protein coupled receptor moody (670 aa).

The Extracellular portion of the chain corresponds to 1–40 (MSDETTISLEDGYPPLEALTTMVPPADATGFSQSLLTFAA). The helical transmembrane segment at 41–61 (VMTFLIMIVGICGNLLTVVAL) threads the bilayer. Residues 62–69 (LKCPKVRN) are Cytoplasmic-facing. Residues 70 to 90 (VAAAFIISLCIADLLFCALVL) traverse the membrane as a helical segment. At 91–111 (PFQGLRFVQGTWRHGQVLCRL) the chain is on the extracellular side. A disulfide bridge links Cys109 with Cys188. A helical membrane pass occupies residues 112-132 (IPFIQYGNIGVSLLCIAMITI). Topologically, residues 133 to 152 (NRYVMITHHGLYARIYKRHW) are cytoplasmic. The helical transmembrane segment at 153–173 (IAVMIAACWLFSYGMQLPTLL) threads the bilayer. Over 174-202 (GEWGRFGYDSRLQTCSIMTDDHGHSSKTT) the chain is Extracellular. A helical transmembrane segment spans residues 203–223 (LFITAFVIPCLVIIACYAKIF). Residues 224–313 (WVVHKSEQRL…AKRNEWRITK (90 aa)) lie on the Cytoplasmic side of the membrane. The interval 258-302 (LPSGAECQPSNRVSSDSSSSFSIDVPETAPSGKQQPTRVKDQREV) is disordered. Positions 267 to 279 (SNRVSSDSSSSFS) are enriched in low complexity. The chain crosses the membrane as a helical span at residues 314–334 (MVLAIFLSFVVCYLPITIVKV). The Extracellular portion of the chain corresponds to 335-345 (ADKNVEHPSLH). The helical transmembrane segment at 346–366 (ICSYILLYLSACINPIIYVIM) threads the bilayer. The Cytoplasmic segment spans residues 367 to 670 (NKQYRKAYKT…LTAKMKFPKD (304 aa)). 3 disordered regions span residues 461–490 (DLISKSNLPQPNVTPPPPSVLTATPNGSNS), 562–622 (ELPP…YMNV), and 636–670 (TNAVAPESDSGPANTSATVSISGSKLTAKMKFPKD). Over residues 564–584 (PPTPPATSAPTTPAPPPPSSP) the composition is skewed to pro residues. Residues 585–598 (LHPLSTDSSTTTIS) show a composition bias toward low complexity. Residues 646–660 (GPANTSATVSISGSK) are compositionally biased toward polar residues.

Belongs to the G-protein coupled receptor 1 family. Isoform A and isoform B are expressed in the head. Isoform B only is expressed in the body. Expressed in embryonic glial cells that are involved in ensheathment and insulation of the nervous system. Both isoforms are expressed in glia that insulate the larval and adult nervous system. Also expressed in the germ cells, the gut, and the heart.

Its subcellular location is the cell membrane. Its function is as follows. Isoform A and isoform B are required in glia to regulate the acute sensitivity to cocaine and to continuously maintain the proper blood-brain barrier (BBB) function. A moody-mediated signaling pathway functions in glia to regulate nervous system insulation and drug-related behaviors. Galphai and Galphao, and the regulator of G protein signaling, loco, are required in the surface glia to achieve effective insulation. The components function by regulating the cortical actin and thereby stabilizing the extended morphology of the surface glia, which in turn is necessary for the formation of septate junctions of sufficient length to achieve proper sealing of the nerve cord. The polypeptide is G-protein coupled receptor moody (Drosophila melanogaster (Fruit fly)).